We begin with the raw amino-acid sequence, 107 residues long: Iron-sulfur cluster assembly protein CyaY (107 aa).

It belongs to the frataxin family.

In terms of biological role, involved in iron-sulfur (Fe-S) cluster assembly. May act as a regulator of Fe-S biogenesis. This Neisseria meningitidis serogroup C / serotype 2a (strain ATCC 700532 / DSM 15464 / FAM18) protein is Iron-sulfur cluster assembly protein CyaY.